Here is a 186-residue protein sequence, read N- to C-terminus: Peptidyl-tRNA hydrolase (186 aa).

Tyrosine 14 contacts tRNA. The Proton acceptor role is filled by histidine 19. Residues phenylalanine 64, asparagine 66, and asparagine 112 each coordinate tRNA.

It belongs to the PTH family. Monomer.

Its subcellular location is the cytoplasm. It carries out the reaction an N-acyl-L-alpha-aminoacyl-tRNA + H2O = an N-acyl-L-amino acid + a tRNA + H(+). Its function is as follows. Hydrolyzes ribosome-free peptidyl-tRNAs (with 1 or more amino acids incorporated), which drop off the ribosome during protein synthesis, or as a result of ribosome stalling. Functionally, catalyzes the release of premature peptidyl moieties from peptidyl-tRNA molecules trapped in stalled 50S ribosomal subunits, and thus maintains levels of free tRNAs and 50S ribosomes. This Listeria monocytogenes serovar 1/2a (strain ATCC BAA-679 / EGD-e) protein is Peptidyl-tRNA hydrolase.